The sequence spans 394 residues: Probable glycosyltransferase FCK3 (394 aa).

It belongs to the afumC glycosyltransferase family.

The protein operates within secondary metabolite biosynthesis. Probable glycosyl transferase; part of the gene cluster that mediates the biosynthesis of cytokinins such as fusatin, fusatinic acids or 8-oxofusatin, known for their growth promoting and anti-senescence activities toward host plants. FCK1 is a bifunctional enzyme that performs the first steps in the biosynthesis of Fusarium cytokinins. It first condenses adenosine monophosphate (AMP) with dimethylallyl diphosphate (DMAPP) to yield isoprenyl adenosine monophosphate. It then catalyzes the removal of the phosphoribose to produce isopentenylaldehyde. The cytochrome P450 monooxygenase then converts isopentenylaldehyde to trans-zeatin. A condensation step converts trans-zeatin to fusatin which is further modified to produce fusatinic acid. The mechanism for oxidation of fusatin to fusatinic acid remains unknown. 8-oxofusatin could be produced through several pathways, via direct oxygenation of fusatin, or via the 8-oxo-pentenyladenine intermediate which itself must arise from either the prenylation of 8-oxo-AMP by FCK1 and/or oxygenation of isopentenylaldehyde. Both the FCK3 and FCK4 enzymes act downstream of the identified cytokinins to produce yet unidentified compounds. The protein is Probable glycosyltransferase FCK3 of Fusarium pseudograminearum (strain CS3096) (Wheat and barley crown-rot fungus).